The primary structure comprises 323 residues: Olfactory receptor 1E2 (323 aa).

Over 1 to 25 (MMGQNQTSISDFLLLGLPIQPEQQN) the chain is Extracellular. The N-linked (GlcNAc...) asparagine glycan is linked to Asn-5. The chain crosses the membrane as a helical span at residues 26–49 (LCYALFLAMYLTTLLGNLLIIVLI). Topologically, residues 50–57 (RLDSHLHT) are cytoplasmic. The chain crosses the membrane as a helical span at residues 58-79 (PVYLFLSNLSFSDLCFSSVTMP). Over 80–100 (KLLQNMQNQDPSIPYADCLTQ) the chain is Extracellular. Cys-97 and Cys-198 are joined by a disulfide. The chain crosses the membrane as a helical span at residues 101–120 (MYFFLYFSDLESFLLVAMAY). The Cytoplasmic portion of the chain corresponds to 121 to 148 (DRYVAICFPMHYTAICFLLHYTAIMSPM). The chain crosses the membrane as a helical span at residues 149 to 167 (LCLSVVALSWVLTTFHAML). The Extracellular segment spans residues 168–205 (HTLLMARLCFCADNVIPHFFCDMSALLKLACSDTRVNE). The chain crosses the membrane as a helical span at residues 206–228 (WVIFIMGGLILVIPFLLILGSYA). At 229–245 (RIVSSILKVPSSKGICK) the chain is on the cytoplasmic side. Residues 246 to 269 (AFSTCGSHLSVVSLFYGTVIGLYL) traverse the membrane as a helical segment. At 270–281 (CPSANSSTLKDT) the chain is on the extracellular side. Asn-274 carries an N-linked (GlcNAc...) asparagine glycan. Residues 282 to 301 (VMAMMYTVVTPMLTPFIYSL) form a helical membrane-spanning segment. Residues 302–323 (RNRDMKGALERVICKRKNPFLL) lie on the Cytoplasmic side of the membrane.

It belongs to the G-protein coupled receptor 1 family.

The protein resides in the cell membrane. Its function is as follows. Odorant receptor. The sequence is that of Olfactory receptor 1E2 (OR1E2) from Homo sapiens (Human).